The sequence spans 513 residues: GMP synthase [glutamine-hydrolyzing] (513 aa).

One can recognise a Glutamine amidotransferase type-1 domain in the interval 8 to 198 (MILVLDFGSQ…VFGVCECEGE (191 aa)). Residue Cys-85 is the Nucleophile of the active site. Active-site residues include His-172 and Glu-174. Residues 199-388 (WSMENFIEIE…LGIPDEIVWR (190 aa)) form the GMPS ATP-PPase domain. 227–233 (GGVDSSV) serves as a coordination point for ATP.

As to quaternary structure, homodimer.

It catalyses the reaction XMP + L-glutamine + ATP + H2O = GMP + L-glutamate + AMP + diphosphate + 2 H(+). It functions in the pathway purine metabolism; GMP biosynthesis; GMP from XMP (L-Gln route): step 1/1. Functionally, catalyzes the synthesis of GMP from XMP. The polypeptide is GMP synthase [glutamine-hydrolyzing] (guaA) (Bacillus subtilis (strain 168)).